We begin with the raw amino-acid sequence, 254 residues long: Fasciclin-like arabinogalactan protein 7 (254 aa).

The signal sequence occupies residues 1–22 (MAKMQLSIFIAVVALIVCSASA). An FAS1 domain is found at 44-186 (NVNLTELLSV…VAVYQVNRVL (143 aa)). 4 N-linked (GlcNAc...) asparagine glycosylation sites follow: Asn-46, Asn-78, Asn-104, and Asn-130. The disordered stretch occupies residues 203–233 (APAPIVSAPSDSPSVADSEGASSPKSSHKNS). The span at 206 to 220 (PIVSAPSDSPSVADS) shows a compositional bias: low complexity. The segment covering 222–233 (GASSPKSSHKNS) has biased composition (polar residues). Residue Asn-232 is the site of GPI-anchor amidated asparagine attachment. The propeptide at 233–254 (SGQKLLLAPISMVISGLVALFL) is removed in mature form.

It belongs to the fasciclin-like AGP family.

It localises to the cell membrane. In terms of biological role, may be a cell surface adhesion protein. In Arabidopsis thaliana (Mouse-ear cress), this protein is Fasciclin-like arabinogalactan protein 7 (FLA7).